The primary structure comprises 261 residues: Gap junction beta-6 protein (261 aa).

Topologically, residues Met-1–Lys-22 are cytoplasmic. The chain crosses the membrane as a helical span at residues Val-23–Gly-45. At Asp-46–Arg-75 the chain is on the extracellular side. The helical transmembrane segment at Leu-76 to Tyr-98 threads the bilayer. Over Arg-99–Ser-131 the chain is Cytoplasmic. Residues Leu-132–Phe-154 traverse the membrane as a helical segment. Residues Tyr-155–Thr-192 lie on the Extracellular side of the membrane. Residues Ile-193 to Leu-215 traverse the membrane as a helical segment. Residues Lys-216–Ser-261 are Cytoplasmic-facing.

This sequence belongs to the connexin family. Beta-type (group I) subfamily. In terms of assembly, a connexon is composed of a hexamer of connexins. Interacts with CNST.

The protein localises to the cell membrane. It localises to the cell junction. The protein resides in the gap junction. In terms of biological role, one gap junction consists of a cluster of closely packed pairs of transmembrane channels, the connexons, through which materials of low MW diffuse from one cell to a neighboring cell. The chain is Gap junction beta-6 protein (GJB6) from Bos taurus (Bovine).